We begin with the raw amino-acid sequence, 264 residues long: Thymidylate synthase (264 aa).

Arg-21 lines the dUMP pocket. His-51 contacts (6R)-5,10-methylene-5,6,7,8-tetrahydrofolate. Position 126–127 (126–127 (RR)) interacts with dUMP. Residue Cys-146 is the Nucleophile of the active site. Residues 166-169 (RSAD), Asn-177, and 207-209 (HLY) contribute to the dUMP site. Asp-169 is a (6R)-5,10-methylene-5,6,7,8-tetrahydrofolate binding site. Ala-263 contributes to the (6R)-5,10-methylene-5,6,7,8-tetrahydrofolate binding site.

This sequence belongs to the thymidylate synthase family. Bacterial-type ThyA subfamily. As to quaternary structure, homodimer.

The protein localises to the cytoplasm. The enzyme catalyses dUMP + (6R)-5,10-methylene-5,6,7,8-tetrahydrofolate = 7,8-dihydrofolate + dTMP. Its pathway is pyrimidine metabolism; dTTP biosynthesis. Catalyzes the reductive methylation of 2'-deoxyuridine-5'-monophosphate (dUMP) to 2'-deoxythymidine-5'-monophosphate (dTMP) while utilizing 5,10-methylenetetrahydrofolate (mTHF) as the methyl donor and reductant in the reaction, yielding dihydrofolate (DHF) as a by-product. This enzymatic reaction provides an intracellular de novo source of dTMP, an essential precursor for DNA biosynthesis. The sequence is that of Thymidylate synthase from Dechloromonas aromatica (strain RCB).